Reading from the N-terminus, the 213-residue chain is uncharacterized protein (213 aa).

This is an uncharacterized protein from Homo sapiens (Human).